The primary structure comprises 124 residues: Small ribosomal subunit protein uS12 (124 aa).

The residue at position 89 (aspartate 89) is a 3-methylthioaspartic acid. Lysine 108 is modified (N6-acetyllysine).

Belongs to the universal ribosomal protein uS12 family. In terms of assembly, part of the 30S ribosomal subunit. Contacts proteins S8 and S17. May interact with IF1 in the 30S initiation complex.

In terms of biological role, with S4 and S5 plays an important role in translational accuracy. Its function is as follows. Interacts with and stabilizes bases of the 16S rRNA that are involved in tRNA selection in the A site and with the mRNA backbone. Located at the interface of the 30S and 50S subunits, it traverses the body of the 30S subunit contacting proteins on the other side and probably holding the rRNA structure together. The combined cluster of proteins S8, S12 and S17 appears to hold together the shoulder and platform of the 30S subunit. This chain is Small ribosomal subunit protein uS12, found in Escherichia coli (strain K12 / MC4100 / BW2952).